We begin with the raw amino-acid sequence, 251 residues long: Octanoyltransferase (251 aa).

The region spanning 56–237 (ADTGDEIWVV…RLIANLDGES (182 aa)) is the BPL/LPL catalytic domain. Residues 96–103 (RGGQITYH), 168–170 (ALG), and 181–183 (GLS) each bind substrate. Cys-199 acts as the Acyl-thioester intermediate in catalysis.

It belongs to the LipB family.

It localises to the cytoplasm. The catalysed reaction is octanoyl-[ACP] + L-lysyl-[protein] = N(6)-octanoyl-L-lysyl-[protein] + holo-[ACP] + H(+). It functions in the pathway protein modification; protein lipoylation via endogenous pathway; protein N(6)-(lipoyl)lysine from octanoyl-[acyl-carrier-protein]: step 1/2. Functionally, catalyzes the transfer of endogenously produced octanoic acid from octanoyl-acyl-carrier-protein onto the lipoyl domains of lipoate-dependent enzymes. Lipoyl-ACP can also act as a substrate although octanoyl-ACP is likely to be the physiological substrate. The sequence is that of Octanoyltransferase from Burkholderia ambifaria (strain ATCC BAA-244 / DSM 16087 / CCUG 44356 / LMG 19182 / AMMD) (Burkholderia cepacia (strain AMMD)).